A 227-amino-acid chain; its full sequence is Cytochrome c oxidase subunit 2 (227 aa).

Over 1 to 14 the chain is Mitochondrial intermembrane; it reads MANHSQLGFQDASS. The helical transmembrane segment at 15–45 threads the bilayer; it reads PIMEELVEFHDHALMVALAICSLVLYLLTLM. At 46 to 58 the chain is on the mitochondrial matrix side; it reads LMEKLSSNTVDAQ. A helical transmembrane segment spans residues 59 to 86; that stretch reads EVELIWTILPAIVLVLLALPSLQILYMM. The Mitochondrial intermembrane segment spans residues 87-227; that stretch reads DEIDEPDLTL…FEAWSSLLSS (141 aa). Cu cation is bound by residues histidine 160, cysteine 195, glutamate 197, cysteine 199, histidine 203, and methionine 206. Glutamate 197 provides a ligand contact to Mg(2+).

This sequence belongs to the cytochrome c oxidase subunit 2 family. In terms of assembly, component of the cytochrome c oxidase (complex IV, CIV), a multisubunit enzyme composed of 14 subunits. The complex is composed of a catalytic core of 3 subunits MT-CO1, MT-CO2 and MT-CO3, encoded in the mitochondrial DNA, and 11 supernumerary subunits COX4I, COX5A, COX5B, COX6A, COX6B, COX6C, COX7A, COX7B, COX7C, COX8 and NDUFA4, which are encoded in the nuclear genome. The complex exists as a monomer or a dimer and forms supercomplexes (SCs) in the inner mitochondrial membrane with NADH-ubiquinone oxidoreductase (complex I, CI) and ubiquinol-cytochrome c oxidoreductase (cytochrome b-c1 complex, complex III, CIII), resulting in different assemblies (supercomplex SCI(1)III(2)IV(1) and megacomplex MCI(2)III(2)IV(2)). Found in a complex with TMEM177, COA6, COX18, COX20, SCO1 and SCO2. Interacts with TMEM177 in a COX20-dependent manner. Interacts with COX20. Interacts with COX16. Cu cation is required as a cofactor.

It localises to the mitochondrion inner membrane. It catalyses the reaction 4 Fe(II)-[cytochrome c] + O2 + 8 H(+)(in) = 4 Fe(III)-[cytochrome c] + 2 H2O + 4 H(+)(out). Functionally, component of the cytochrome c oxidase, the last enzyme in the mitochondrial electron transport chain which drives oxidative phosphorylation. The respiratory chain contains 3 multisubunit complexes succinate dehydrogenase (complex II, CII), ubiquinol-cytochrome c oxidoreductase (cytochrome b-c1 complex, complex III, CIII) and cytochrome c oxidase (complex IV, CIV), that cooperate to transfer electrons derived from NADH and succinate to molecular oxygen, creating an electrochemical gradient over the inner membrane that drives transmembrane transport and the ATP synthase. Cytochrome c oxidase is the component of the respiratory chain that catalyzes the reduction of oxygen to water. Electrons originating from reduced cytochrome c in the intermembrane space (IMS) are transferred via the dinuclear copper A center (CU(A)) of subunit 2 and heme A of subunit 1 to the active site in subunit 1, a binuclear center (BNC) formed by heme A3 and copper B (CU(B)). The BNC reduces molecular oxygen to 2 water molecules using 4 electrons from cytochrome c in the IMS and 4 protons from the mitochondrial matrix. The chain is Cytochrome c oxidase subunit 2 (MT-CO2) from Gallus gallus (Chicken).